The primary structure comprises 190 residues: Potassium-transporting ATPase KdpC subunit (190 aa).

A helical transmembrane segment spans residues 13-33 (LLLILTLITGILYPIVTTGFA).

Belongs to the KdpC family. In terms of assembly, the system is composed of three essential subunits: KdpA, KdpB and KdpC.

The protein localises to the cell inner membrane. Part of the high-affinity ATP-driven potassium transport (or Kdp) system, which catalyzes the hydrolysis of ATP coupled with the electrogenic transport of potassium into the cytoplasm. This subunit acts as a catalytic chaperone that increases the ATP-binding affinity of the ATP-hydrolyzing subunit KdpB by the formation of a transient KdpB/KdpC/ATP ternary complex. The sequence is that of Potassium-transporting ATPase KdpC subunit from Leptospira interrogans serogroup Icterohaemorrhagiae serovar copenhageni (strain Fiocruz L1-130).